The primary structure comprises 201 residues: NADH-quinone oxidoreductase subunit I (201 aa).

4Fe-4S ferredoxin-type domains follow at residues 78-107 and 116-147; these read MSYEKAKSRCVACYMCQTACPMPTLFRIEA and KVVRFDMNLLNCLFCGLCVDACPVGCLTMTDI. 8 residues coordinate [4Fe-4S] cluster: C87, C90, C93, C97, C127, C130, C133, and C137.

It belongs to the complex I 23 kDa subunit family. In terms of assembly, NDH-1 is composed of 14 different subunits. Subunits NuoA, H, J, K, L, M, N constitute the membrane sector of the complex. [4Fe-4S] cluster serves as cofactor.

It is found in the cell inner membrane. It catalyses the reaction a quinone + NADH + 5 H(+)(in) = a quinol + NAD(+) + 4 H(+)(out). Functionally, NDH-1 shuttles electrons from NADH, via FMN and iron-sulfur (Fe-S) centers, to quinones in the respiratory chain. The immediate electron acceptor for the enzyme in this species is believed to be ubiquinone. Couples the redox reaction to proton translocation (for every two electrons transferred, four hydrogen ions are translocated across the cytoplasmic membrane), and thus conserves the redox energy in a proton gradient. In Aquifex aeolicus (strain VF5), this protein is NADH-quinone oxidoreductase subunit I.